Reading from the N-terminus, the 418-residue chain is Ankyrin repeat and SOCS box protein 6 (418 aa).

ANK repeat units lie at residues 65–95 (EGVS…NLNF), 100–129 (TYYT…DINR), 134–164 (HESS…DVNA), 168–203 (NGKT…DVKA), 224–253 (CGDK…DPSE), and 258–287 (ESLT…AYNC). The SOCS box domain maps to 358-413 (ALHASLRQLESYPPPLKHLCRVSIRLCLRPWPVDTKVKALPLPDRLKWYLLSAHSD).

This sequence belongs to the ankyrin SOCS box (ASB) family. In terms of assembly, binds APS. Identified in a complex with ELOB and ELOC. Interacts with CUL5 and RNF7. Interacts with SQSTM1. As to expression, detected in adipocytes.

Its subcellular location is the cytoplasm. Its pathway is protein modification; protein ubiquitination. In terms of biological role, probable substrate-recognition component of a SCF-like ECS (Elongin-Cullin-SOCS-box protein) E3 ubiquitin-protein ligase complex which mediates the ubiquitination and subsequent proteasomal degradation of target proteins. May play a role in the regulation of cell proliferation and autophagy by promoting the ubiquitination and degradation of SQSTM1. The chain is Ankyrin repeat and SOCS box protein 6 (Asb6) from Mus musculus (Mouse).